The chain runs to 264 residues: Dehydrodolichyl diphosphate synthase complex subunit SPAC4D7.04c (264 aa).

This sequence belongs to the UPP synthase family. Forms an active dehydrodolichyl diphosphate synthase complex with nus1. It depends on Mg(2+) as a cofactor.

It localises to the endoplasmic reticulum membrane. It carries out the reaction n isopentenyl diphosphate + (2E,6E)-farnesyl diphosphate = a di-trans,poly-cis-polyprenyl diphosphate + n diphosphate. It functions in the pathway protein modification; protein glycosylation. With nus1, forms the dehydrodolichyl diphosphate synthase (DDS) complex, an essential component of the dolichol monophosphate (Dol-P) biosynthetic machinery. Adds multiple copies of isopentenyl pyrophosphate (IPP) to farnesyl pyrophosphate (FPP) to produce dehydrodolichyl diphosphate (Dedol-PP), a precursor of dolichol which is utilized as a sugar carrier in protein glycosylation in the endoplasmic reticulum (ER). This is Dehydrodolichyl diphosphate synthase complex subunit SPAC4D7.04c from Schizosaccharomyces pombe (strain 972 / ATCC 24843) (Fission yeast).